Here is a 364-residue protein sequence, read N- to C-terminus: Peptide chain release factor 1 (364 aa).

Gln238 carries the post-translational modification N5-methylglutamine. Over residues 286 to 297 the composition is skewed to basic and acidic residues; the sequence is DEKRQAEEDSTR. The interval 286–315 is disordered; the sequence is DEKRQAEEDSTRRNLVGSGDRSERIRTYNY.

The protein belongs to the prokaryotic/mitochondrial release factor family. Methylated by PrmC. Methylation increases the termination efficiency of RF1.

The protein localises to the cytoplasm. Peptide chain release factor 1 directs the termination of translation in response to the peptide chain termination codons UAG and UAA. The sequence is that of Peptide chain release factor 1 from Idiomarina loihiensis (strain ATCC BAA-735 / DSM 15497 / L2-TR).